The chain runs to 181 residues: Cytolethal distending toxin subunit C (181 aa).

Positions 1–15 (MKKLAIVFTMLLIAG) are cleaved as a signal peptide. The N-palmitoyl cysteine moiety is linked to residue cysteine 16. Cysteine 16 carries the S-diacylglycerol cysteine lipid modification. The 103-residue stretch at 79 to 181 (QSGWIMIRTP…NPLNTESPII (103 aa)) folds into the Ricin B-type lectin domain.

In terms of assembly, heterotrimer of 3 subunits, CdtA, CdtB and CdtC.

It localises to the cell outer membrane. Functionally, part of the tripartite complex that is required for the CDT activity. CdtC, along with CdtA, probably forms a heterodimeric subunit required for the delivery of CdtB. The polypeptide is Cytolethal distending toxin subunit C (cdtC) (Escherichia coli).